The sequence spans 326 residues: Flavanone 3-dioxygenase 3 (326 aa).

The segment covering 1-15 (MSDTSKGIPQEQLPS) has biased composition (polar residues). The interval 1–21 (MSDTSKGIPQEQLPSQELHPP) is disordered. Residues 175–276 (EGLQLLSVNC…RISLASIHGF (102 aa)) form the Fe2OG dioxygenase domain. 3 residues coordinate Fe cation: His200, Asp202, and His257. Residue Arg267 participates in 2-oxoglutarate binding.

This sequence belongs to the iron/ascorbate-dependent oxidoreductase family. Fe(2+) serves as cofactor. The cofactor is L-ascorbate. As to expression, expressed at very low levels in roots, leaves, stems and seeds.

The enzyme catalyses a (2S)-flavan-4-one + 2-oxoglutarate + O2 = a (2R,3R)-dihydroflavonol + succinate + CO2. Its pathway is secondary metabolite biosynthesis; flavonoid biosynthesis. Functionally, catalyzes the 3-beta-hydroxylation of 2S-flavanones to 2R,3R-dihydroflavonols which are intermediates in the biosynthesis of flavonols, anthocyanidins, catechins and proanthocyanidins in plants. Converts (2S)-eriodictyol to (+)-taxifolin and (2S)-naringenin to (+)-(2R/3R)-dihydrokaempferol in vitro. This Oryza sativa subsp. japonica (Rice) protein is Flavanone 3-dioxygenase 3.